Reading from the N-terminus, the 446-residue chain is MAPRSRRRKHKKPPPVIPMIEIPPTEVSPVSPALSKPGPSIDALGFISLDNNVPGLSQLILQKLNMKNYEEYKLVINGGTPVSSFGFRCQQEMFQKMEDTFRFCAYCKVLPHGLSNCKVLRHCKRCRNVYYCDTECQRSDWPAHRKVCRELRLVAVDRVMEWLLVTGDFVLPSGPWPWLPEDIQNWDTWFSMRGLQLESTLNALLGSHSMTMLWASLGRPRPDPDVLHGSLKRLMTDVLSRPLTLGLGLRTVAIDVGKTGGSTLHVVGASHVETFLIRSGDYDELGYMFPEHLGFHVIMVGVDVATDLLQSSSSLSLEPGTIQLSGHRALYHDFWEEQIETGILAHPDLVAAFHPGFHASPGLMEAWLPTLLLLRDYEIPTLITVYSQQELEASLQILVNLDTHIIACGANPFASLKPEQVYSNPNKQPVYSSAYYIMFLGSSPAN.

Zn(2+) contacts are provided by Cys104, Cys107, Cys123, Cys126, Cys132, Cys136, His144, and Cys148. Residues 104–148 (CAYCKVLPHGLSNCKVLRHCKRCRNVYYCDTECQRSDWPAHRKVC) form an MYND-type zinc finger.

This Mus musculus (Mouse) protein is Putative protein MSS51 homolog, mitochondrial (Mss51).